The sequence spans 469 residues: Ribosomal protein uS12 methylthiotransferase RimO (469 aa).

The 116-residue stretch at 17 to 132 (PRVGFVSLGC…VMDAVHLNLP (116 aa)) folds into the MTTase N-terminal domain. Positions 26, 62, 91, 167, 171, and 174 each coordinate [4Fe-4S] cluster. The Radical SAM core domain occupies 153-395 (LTPKHYAYLK…AVAEEVSSLK (243 aa)). The region spanning 397-469 (QQRVGATMQV…QGHDLVAIPV (73 aa)) is the TRAM domain.

It belongs to the methylthiotransferase family. RimO subfamily. Requires [4Fe-4S] cluster as cofactor.

The protein localises to the cytoplasm. The catalysed reaction is L-aspartate(89)-[ribosomal protein uS12]-hydrogen + (sulfur carrier)-SH + AH2 + 2 S-adenosyl-L-methionine = 3-methylsulfanyl-L-aspartate(89)-[ribosomal protein uS12]-hydrogen + (sulfur carrier)-H + 5'-deoxyadenosine + L-methionine + A + S-adenosyl-L-homocysteine + 2 H(+). In terms of biological role, catalyzes the methylthiolation of an aspartic acid residue of ribosomal protein uS12. This is Ribosomal protein uS12 methylthiotransferase RimO from Polaromonas sp. (strain JS666 / ATCC BAA-500).